Consider the following 279-residue polypeptide: Pleckstrin homology domain-containing family F member 1 (279 aa).

Residues 35–131 (VLLGEGVLTK…WISHIEECVR (97 aa)) enclose the PH domain. The FYVE-type zinc finger occupies 152–212 (DKATDICMRC…VCSLCYRELA (61 aa)). Zn(2+) contacts are provided by C158, C161, C175, C178, C183, C186, C204, and C207. A disordered region spans residues 220–263 (AREGIGGSPPQLSHLGGTVCGASSGDDDDSDEDREGNGDGDWPT). Acidic residues predominate over residues 244 to 253 (GDDDDSDEDR).

Widely expressed.

The protein resides in the nucleus. It is found in the cytoplasm. It localises to the perinuclear region. The protein localises to the lysosome. Its function is as follows. May induce apoptosis through the lysosomal-mitochondrial pathway. Translocates to the lysosome initiating the permeabilization of lysosomal membrane (LMP) and resulting in the release of CTSD and CTSL to the cytoplasm. Triggers the caspase-independent apoptosis by altering mitochondrial membrane permeabilization (MMP) resulting in the release of PDCD8. The chain is Pleckstrin homology domain-containing family F member 1 (Plekhf1) from Mus musculus (Mouse).